Consider the following 72-residue polypeptide: Toxin Acra II-3 (72 aa).

Residues 4-67 (PGNYPLDTRG…VWNAAKNYCK (64 aa)) form the LCN-type CS-alpha/beta domain. Intrachain disulfides connect Cys18–Cys41, Cys27–Cys46, and Cys31–Cys48.

This sequence belongs to the long (3 C-C) scorpion toxin superfamily. Sodium channel inhibitor family. Beta subfamily. As to expression, expressed by the venom gland.

The protein localises to the secreted. Functionally, binds to sodium channels (Nav) and affects the channel activation process. This Androctonus crassicauda (Arabian fat-tailed scorpion) protein is Toxin Acra II-3.